Consider the following 470-residue polypeptide: MRALRCSIIRGVAGLRMASSVLDEMKEQMLRRSKEDHKKIGDLRKKHGHEKLCDATIDAVYGGMRGITGLVYEPSLLDSAEGIRFRGLTILECQEMLPKAPGGKEPLPEAMFWLLMTGEVPTEEQARGLNAELHRRVDPEAIAAAQKAIAALPKNAHPMTAFSVGVLALQTYSKFAAAYAAGKSNKKTYWEYALEDSLDMLARTPAVAAMIYNRETKGQVELAAPSNSDLDWAANFAKMLGFQDEEFRECMRLYLSVHADHEGGNVSAHTTTLVASALSDPYLAFSAGLNGLAGPLHGLANQEVLKYLFSMQERVKADGVNVHDEAALEKALTKYTWELLNSGQVVPGYGHAVLRKVDPRYTCQRNFCLRHNFQDDLFKLVNTIYMIMPGILKEHGKTKNPYPNVDAHSGVLLQHYGLTEQNYYTVLFGLSRQMGVLAGVVWDRLQGRPLERPKSITTEMLAKKYLCNSL.

Residues His297, His351, and Asp406 contribute to the active site.

This sequence belongs to the citrate synthase family. As to quaternary structure, homodimer.

The protein resides in the mitochondrion matrix. It catalyses the reaction oxaloacetate + acetyl-CoA + H2O = citrate + CoA + H(+). Its pathway is carbohydrate metabolism; tricarboxylic acid cycle; isocitrate from oxaloacetate: step 1/2. The polypeptide is Probable citrate synthase, mitochondrial (Leishmania infantum).